Here is a 63-residue protein sequence, read N- to C-terminus: Progonadoliberin-1 (63 aa).

Q1 carries the pyrrolidone carboxylic acid modification. Position 10 is a glycine amide (G10).

The protein belongs to the GnRH family. The precursor is cleaved by ACE, which removes the Gly-Lys-Arg peptide at the C-terminus, leading to mature hormone. The mature form of Gonadoliberin-1 is also cleaved and degraded by ACE.

The protein resides in the secreted. In terms of biological role, stimulates the secretion of gonadotropins; it stimulates the secretion of both luteinizing and follicle-stimulating hormones. The protein is Progonadoliberin-1 (GNRH1) of Mesocricetus auratus (Golden hamster).